We begin with the raw amino-acid sequence, 117 residues long: Anti-sigma F factor antagonist (117 aa).

Residues 3 to 113 form the STAS domain; sequence LQIEMEHHRG…DNEVNALTEL (111 aa). Ser58 carries the post-translational modification Phosphoserine.

Belongs to the anti-sigma-factor antagonist family. Post-translationally, phosphorylated by SpoIIAB on a serine residue.

Its function is as follows. In the phosphorylated form it could act as an anti-anti-sigma factor that counteracts SpoIIAB and thus releases sigma f from inhibition. This is Anti-sigma F factor antagonist (spoIIAA) from Paenibacillus polymyxa (Bacillus polymyxa).